A 330-amino-acid chain; its full sequence is Ferredoxin--NADP reductase (330 aa).

FAD-binding residues include threonine 18, glutamate 37, glutamine 45, tyrosine 50, valine 90, phenylalanine 124, aspartate 286, and threonine 327.

The protein belongs to the ferredoxin--NADP reductase type 2 family. In terms of assembly, homodimer. It depends on FAD as a cofactor.

The enzyme catalyses 2 reduced [2Fe-2S]-[ferredoxin] + NADP(+) + H(+) = 2 oxidized [2Fe-2S]-[ferredoxin] + NADPH. In Halalkalibacterium halodurans (strain ATCC BAA-125 / DSM 18197 / FERM 7344 / JCM 9153 / C-125) (Bacillus halodurans), this protein is Ferredoxin--NADP reductase.